The following is a 209-amino-acid chain: Ribonuclease HII (209 aa).

Positions 18–209 (GLVAGVDEVG…FKPVKALLER (192 aa)) constitute an RNase H type-2 domain. Residues Asp24, Glu25, and Asp116 each contribute to the a divalent metal cation site.

Belongs to the RNase HII family. The cofactor is Mn(2+). Requires Mg(2+) as cofactor.

It is found in the cytoplasm. The catalysed reaction is Endonucleolytic cleavage to 5'-phosphomonoester.. Endonuclease that specifically degrades the RNA of RNA-DNA hybrids. The sequence is that of Ribonuclease HII from Shewanella sp. (strain MR-7).